A 470-amino-acid chain; its full sequence is Cysteine--tRNA ligase (470 aa).

A Zn(2+)-binding site is contributed by Cys-28. The short motif at 30–40 (PTVYNYIHIGN) is the 'HIGH' region element. Zn(2+) contacts are provided by Cys-212, His-237, and Glu-241. The 'KMSKS' region motif lies at 271–275 (KMSKS). Lys-274 is a binding site for ATP.

The protein belongs to the class-I aminoacyl-tRNA synthetase family. As to quaternary structure, monomer. The cofactor is Zn(2+).

Its subcellular location is the cytoplasm. The enzyme catalyses tRNA(Cys) + L-cysteine + ATP = L-cysteinyl-tRNA(Cys) + AMP + diphosphate. The chain is Cysteine--tRNA ligase from Pediococcus pentosaceus (strain ATCC 25745 / CCUG 21536 / LMG 10740 / 183-1w).